The sequence spans 155 residues: Ribosome maturation factor RimP (155 aa).

Belongs to the RimP family.

It localises to the cytoplasm. Required for maturation of 30S ribosomal subunits. The polypeptide is Ribosome maturation factor RimP (Prochlorococcus marinus (strain MIT 9211)).